Consider the following 528-residue polypeptide: Putative galacturonosyltransferase 2 (528 aa).

The protein belongs to the glycosyltransferase 8 family.

It participates in glycan metabolism; pectin biosynthesis. Its function is as follows. May be involved in pectin and/or xylans biosynthesis in cell walls. This is Putative galacturonosyltransferase 2 (GAUT2) from Arabidopsis thaliana (Mouse-ear cress).